The primary structure comprises 373 residues: UDP-sugar transporter UST74c (373 aa).

Residues 27-49 (LEEKMGGSADRSSLLDGSGSKEL) are disordered. Serine 50 bears the Phosphoserine mark. 8 helical membrane-spanning segments follow: residues 89-111 (HFPS…LGMG), 131-153 (FPLP…TLSL), 174-196 (ILGL…GALL), 206-225 (MRGY…NGVY), 238-260 (YGLM…YVTG), 275-297 (VFVV…TILC), 302-324 (SALT…GMFI), and 329-351 (VFSW…YTYV).

It belongs to the TPT transporter family. SLC35D subfamily.

It localises to the golgi apparatus membrane. Functionally, involved in the import of UDP-sugars from the cytoplasm into the Golgi lumen. This is UDP-sugar transporter UST74c (frc) from Drosophila melanogaster (Fruit fly).